The chain runs to 293 residues: 4-diphosphocytidyl-2-C-methyl-D-erythritol kinase (293 aa).

Lys16 is a catalytic residue. 99–109 is an ATP binding site; it reads PMGAGLGGGSS. The active site involves Asp141.

The protein belongs to the GHMP kinase family. IspE subfamily.

It carries out the reaction 4-CDP-2-C-methyl-D-erythritol + ATP = 4-CDP-2-C-methyl-D-erythritol 2-phosphate + ADP + H(+). It participates in isoprenoid biosynthesis; isopentenyl diphosphate biosynthesis via DXP pathway; isopentenyl diphosphate from 1-deoxy-D-xylulose 5-phosphate: step 3/6. Functionally, catalyzes the phosphorylation of the position 2 hydroxy group of 4-diphosphocytidyl-2C-methyl-D-erythritol. The protein is 4-diphosphocytidyl-2-C-methyl-D-erythritol kinase of Paraburkholderia phymatum (strain DSM 17167 / CIP 108236 / LMG 21445 / STM815) (Burkholderia phymatum).